A 447-amino-acid polypeptide reads, in one-letter code: Glutamate-1-semialdehyde 2,1-aminomutase (447 aa).

Position 272 is an N6-(pyridoxal phosphate)lysine (Lys-272).

The protein belongs to the class-III pyridoxal-phosphate-dependent aminotransferase family. HemL subfamily. As to quaternary structure, homodimer. The cofactor is pyridoxal 5'-phosphate.

It is found in the cytoplasm. The catalysed reaction is (S)-4-amino-5-oxopentanoate = 5-aminolevulinate. It participates in porphyrin-containing compound metabolism; protoporphyrin-IX biosynthesis; 5-aminolevulinate from L-glutamyl-tRNA(Glu): step 2/2. This Leifsonia xyli subsp. xyli (strain CTCB07) protein is Glutamate-1-semialdehyde 2,1-aminomutase.